The following is a 210-amino-acid chain: MKIVEVRHPLVQHKIGLLRDAALSTKGFRELVTELGTLLAYEATANLDTESHVQPGWAGPVEVQRIAGAKITLVPILRAGLGMLPGVLALIPAARVSVVGLQRDEETLQPVPYFERLTGRLEERDALILDPMLATGGTLIATIDMLKRAGARRIKGIFLVAAPEGLKALEAVHPDVEVYTAAIDDHLNEKGYILPGLGDAGDRIFGTRVE.

5-phospho-alpha-D-ribose 1-diphosphate contacts are provided by residues Arg-78, Arg-103, and 130–138 (DPMLATGGT). Residues Ile-193 and 198–200 (GDA) each bind uracil. Asp-199 lines the 5-phospho-alpha-D-ribose 1-diphosphate pocket.

It belongs to the UPRTase family. Requires Mg(2+) as cofactor.

The catalysed reaction is UMP + diphosphate = 5-phospho-alpha-D-ribose 1-diphosphate + uracil. It participates in pyrimidine metabolism; UMP biosynthesis via salvage pathway; UMP from uracil: step 1/1. Its activity is regulated as follows. Allosterically activated by GTP. Catalyzes the conversion of uracil and 5-phospho-alpha-D-ribose 1-diphosphate (PRPP) to UMP and diphosphate. This chain is Uracil phosphoribosyltransferase, found in Xanthomonas campestris pv. campestris (strain 8004).